A 126-amino-acid polypeptide reads, in one-letter code: Large ribosomal subunit protein uL22 (126 aa).

The protein belongs to the universal ribosomal protein uL22 family. Part of the 50S ribosomal subunit.

Functionally, this protein binds specifically to 23S rRNA; its binding is stimulated by other ribosomal proteins, e.g. L4, L17, and L20. It is important during the early stages of 50S assembly. It makes multiple contacts with different domains of the 23S rRNA in the assembled 50S subunit and ribosome. The globular domain of the protein is located near the polypeptide exit tunnel on the outside of the subunit, while an extended beta-hairpin is found that lines the wall of the exit tunnel in the center of the 70S ribosome. This is Large ribosomal subunit protein uL22 from Dinoroseobacter shibae (strain DSM 16493 / NCIMB 14021 / DFL 12).